We begin with the raw amino-acid sequence, 899 residues long: Protein translocase subunit SecA (899 aa).

Residues Q89, 107–111 (GEGKT), and D502 contribute to the ATP site. Positions 882, 884, 893, and 894 each coordinate Zn(2+).

The protein belongs to the SecA family. As to quaternary structure, monomer and homodimer. Part of the essential Sec protein translocation apparatus which comprises SecA, SecYEG and auxiliary proteins SecDF-YajC and YidC. Zn(2+) is required as a cofactor.

The protein localises to the cell inner membrane. It localises to the cytoplasm. It carries out the reaction ATP + H2O + cellular proteinSide 1 = ADP + phosphate + cellular proteinSide 2.. Its function is as follows. Part of the Sec protein translocase complex. Interacts with the SecYEG preprotein conducting channel. Has a central role in coupling the hydrolysis of ATP to the transfer of proteins into and across the cell membrane, serving both as a receptor for the preprotein-SecB complex and as an ATP-driven molecular motor driving the stepwise translocation of polypeptide chains across the membrane. The sequence is that of Protein translocase subunit SecA from Allorhizobium ampelinum (strain ATCC BAA-846 / DSM 112012 / S4) (Agrobacterium vitis (strain S4)).